Consider the following 361-residue polypeptide: Alcohol dehydrogenase 9 (361 aa).

Positions 51, 53, 73, 104, 107, 110, 118, and 167 each coordinate Zn(2+). An alcohol contacts are provided by Thr-53 and His-73. NAD(+) is bound at residue Thr-53. Residues 192-197, Lys-221, 278-280, and Lys-356 contribute to the NAD(+) site; these read GLGGLG and LGA.

Belongs to the zinc-containing alcohol dehydrogenase family. Class-III subfamily. As to quaternary structure, homodimer. Zn(2+) serves as cofactor.

This is Alcohol dehydrogenase 9 from Catharanthus roseus (Madagascar periwinkle).